Here is an 89-residue protein sequence, read N- to C-terminus: Small ribosomal subunit protein uS14A (89 aa).

The protein belongs to the universal ribosomal protein uS14 family. Part of the 30S ribosomal subunit. Contacts proteins S3 and S10.

Functionally, binds 16S rRNA, required for the assembly of 30S particles and may also be responsible for determining the conformation of the 16S rRNA at the A site. The sequence is that of Small ribosomal subunit protein uS14A from Listeria monocytogenes serovar 1/2a (strain ATCC BAA-679 / EGD-e).